Reading from the N-terminus, the 931-residue chain is Probable ubiquitin-like-specific protease 2B (931 aa).

The disordered stretch occupies residues 204 to 224 (SLSDRSALSEASDSEDDEEDW). A compositionally biased stretch (acidic residues) spans 215–224 (SDSEDDEEDW). Residues histidine 489, aspartate 522, and cysteine 577 contribute to the active site. The tract at residues 825-931 (HEEEIDESPP…PTGEAEEMEK (107 aa)) is disordered. A compositionally biased stretch (polar residues) spans 839–851 (SLKSATVGSNTAD). Basic and acidic residues predominate over residues 873–904 (NDRDEEKPLEHDLEIGDKTSEDVGDDCDQKEP).

It belongs to the peptidase C48 family.

Functionally, protease that catalyzes two essential functions in the SUMO pathway: processing of full-length SUMOs to their mature forms and deconjugation of SUMO from targeted proteins. The chain is Probable ubiquitin-like-specific protease 2B (ULP2B) from Arabidopsis thaliana (Mouse-ear cress).